The chain runs to 126 residues: MAILGLGTDIVEISRIQAVVERTGERLARRILSPSEWQHYQQHQQPVRFLAKRFAVKEAAAKAFGTGIRNGLAFNQFEVVNDALGKPTLRLHSRAAELAVELGVKSLHVTLADERRYACATVIIES.

The Mg(2+) site is built by Asp-9 and Glu-58.

It belongs to the P-Pant transferase superfamily. AcpS family. It depends on Mg(2+) as a cofactor.

The protein localises to the cytoplasm. It catalyses the reaction apo-[ACP] + CoA = holo-[ACP] + adenosine 3',5'-bisphosphate + H(+). Its function is as follows. Transfers the 4'-phosphopantetheine moiety from coenzyme A to a Ser of acyl-carrier-protein. In Yersinia pestis bv. Antiqua (strain Angola), this protein is Holo-[acyl-carrier-protein] synthase.